A 1091-amino-acid chain; its full sequence is Protein JSN1 (1091 aa).

Disordered regions lie at residues 31-51 (EYEN…KLGS) and 75-131 (HHSK…GSLT). The span at 99-111 (TVASKTPRASPSR) shows a compositional bias: polar residues. A Phosphoserine modification is found at Ser129. Phosphothreonine is present on Thr131. A phosphoserine mark is found at Ser160 and Ser168. Residues 340–426 (NTISISNVFP…APSKISFAKI (87 aa)) enclose the RRM domain. Low complexity-rich tracts occupy residues 482–494 (QQSQ…NHSS) and 507–520 (NNNN…NNSA). 2 disordered regions span residues 482–534 (QQSQ…PPPN) and 568–591 (HKGT…EFDP). The PUM-HD domain maps to 557-913 (QINSLIKKSL…RLLEEVGLAS (357 aa)). The span at 568–577 (HKGTSDTQNF) shows a compositional bias: polar residues. Pumilio repeat units lie at residues 617–652 (AMLD…IMLR), 653–689 (KTSK…QVTQ), 690–724 (GVKD…FIFE), 725–760 (SIIA…QSIV), and 801–837 (RLTK…IILD). Positions 911 to 981 (LASPSSTHNK…GSSASTLSPG (71 aa)) are disordered. Ser913 carries the phosphoserine modification. 2 stretches are compositionally biased toward low complexity: residues 915-935 (SSTH…SISH) and 951-979 (SVSS…STLS).

This chain is Protein JSN1 (JSN1), found in Saccharomyces cerevisiae (strain ATCC 204508 / S288c) (Baker's yeast).